The primary structure comprises 194 residues: dTTP/UTP pyrophosphatase (194 aa).

The active-site Proton acceptor is the Asp-66.

The protein belongs to the Maf family. YhdE subfamily. A divalent metal cation serves as cofactor.

It localises to the cytoplasm. It carries out the reaction dTTP + H2O = dTMP + diphosphate + H(+). The enzyme catalyses UTP + H2O = UMP + diphosphate + H(+). Its function is as follows. Nucleoside triphosphate pyrophosphatase that hydrolyzes dTTP and UTP. May have a dual role in cell division arrest and in preventing the incorporation of modified nucleotides into cellular nucleic acids. The chain is dTTP/UTP pyrophosphatase from Anaeromyxobacter dehalogenans (strain 2CP-1 / ATCC BAA-258).